The sequence spans 632 residues: ATP-dependent zinc metalloprotease FtsH (632 aa).

Topologically, residues 1–9 (MKPTNEPKK) are cytoplasmic. A helical membrane pass occupies residues 10 to 30 (PFFQSPIILAVLGGILLIFFL). Residues 31–116 (RSFNSDGSFS…INYSGFSESN (86 aa)) lie on the Periplasmic side of the membrane. The chain crosses the membrane as a helical span at residues 117-137 (FFTDMLGWLMPILVILGLWMF). Topologically, residues 138–632 (MANRMQKNMG…RLIPLEEQAS (495 aa)) are cytoplasmic. ATP-binding positions include Ala-173, 213-217 (GTGKT), and His-354. His-434 contacts Zn(2+). Glu-435 is an active-site residue. Zn(2+) is bound by residues His-438 and Asp-511.

In the central section; belongs to the AAA ATPase family. The protein in the C-terminal section; belongs to the peptidase M41 family. In terms of assembly, homohexamer. Requires Zn(2+) as cofactor.

Its subcellular location is the cell inner membrane. In terms of biological role, acts as a processive, ATP-dependent zinc metallopeptidase for both cytoplasmic and membrane proteins. Plays a role in the quality control of integral membrane proteins. This is ATP-dependent zinc metalloprotease FtsH from Helicobacter pylori (strain ATCC 700392 / 26695) (Campylobacter pylori).